Reading from the N-terminus, the 390-residue chain is Lipid-A-disaccharide synthase (390 aa).

It belongs to the LpxB family.

The enzyme catalyses a lipid X + a UDP-2-N,3-O-bis[(3R)-3-hydroxyacyl]-alpha-D-glucosamine = a lipid A disaccharide + UDP + H(+). Its pathway is bacterial outer membrane biogenesis; LPS lipid A biosynthesis. In terms of biological role, condensation of UDP-2,3-diacylglucosamine and 2,3-diacylglucosamine-1-phosphate to form lipid A disaccharide, a precursor of lipid A, a phosphorylated glycolipid that anchors the lipopolysaccharide to the outer membrane of the cell. This is Lipid-A-disaccharide synthase from Neisseria gonorrhoeae (strain ATCC 700825 / FA 1090).